Here is a 175-residue protein sequence, read N- to C-terminus: Adenine phosphoribosyltransferase (175 aa).

It belongs to the purine/pyrimidine phosphoribosyltransferase family. Homodimer.

It is found in the cytoplasm. It carries out the reaction AMP + diphosphate = 5-phospho-alpha-D-ribose 1-diphosphate + adenine. It functions in the pathway purine metabolism; AMP biosynthesis via salvage pathway; AMP from adenine: step 1/1. Functionally, catalyzes a salvage reaction resulting in the formation of AMP, that is energically less costly than de novo synthesis. This chain is Adenine phosphoribosyltransferase, found in Maricaulis maris (strain MCS10) (Caulobacter maris).